A 248-amino-acid polypeptide reads, in one-letter code: Ubiquinone/menaquinone biosynthesis C-methyltransferase UbiE (248 aa).

2 residues coordinate S-adenosyl-L-methionine: Ser-68 and Asp-92.

It belongs to the class I-like SAM-binding methyltransferase superfamily. MenG/UbiE family.

The catalysed reaction is a 2-demethylmenaquinol + S-adenosyl-L-methionine = a menaquinol + S-adenosyl-L-homocysteine + H(+). The enzyme catalyses a 2-methoxy-6-(all-trans-polyprenyl)benzene-1,4-diol + S-adenosyl-L-methionine = a 5-methoxy-2-methyl-3-(all-trans-polyprenyl)benzene-1,4-diol + S-adenosyl-L-homocysteine + H(+). It participates in quinol/quinone metabolism; menaquinone biosynthesis; menaquinol from 1,4-dihydroxy-2-naphthoate: step 2/2. Its pathway is cofactor biosynthesis; ubiquinone biosynthesis. Its function is as follows. Methyltransferase required for the conversion of demethylmenaquinol (DMKH2) to menaquinol (MKH2) and the conversion of 2-polyprenyl-6-methoxy-1,4-benzoquinol (DDMQH2) to 2-polyprenyl-3-methyl-6-methoxy-1,4-benzoquinol (DMQH2). In Rickettsia rickettsii (strain Iowa), this protein is Ubiquinone/menaquinone biosynthesis C-methyltransferase UbiE.